A 250-amino-acid polypeptide reads, in one-letter code: Putative (5-formylfuran-3-yl)methyl phosphate synthase (250 aa).

The active-site Schiff-base intermediate with substrate is Lys29. Lys87 acts as the Proton acceptor in catalysis.

The protein belongs to the MfnB family.

It carries out the reaction 2 D-glyceraldehyde 3-phosphate = 4-(hydroxymethyl)-2-furancarboxaldehyde phosphate + phosphate + 2 H2O. Its function is as follows. Catalyzes the formation of 4-(hydroxymethyl)-2-furancarboxaldehyde phosphate (4-HFC-P) from two molecules of glyceraldehyde-3-P (GA-3-P). The polypeptide is Putative (5-formylfuran-3-yl)methyl phosphate synthase (Streptomyces griseus subsp. griseus (strain JCM 4626 / CBS 651.72 / NBRC 13350 / KCC S-0626 / ISP 5235)).